We begin with the raw amino-acid sequence, 428 residues long: MKNWKTLLLGIAMIANTSFAAPQVVDKVAAIVNNGVVLESDVDGLMQSVKLNAGQAGQQLPDDATLRHQILERLIMDQIILQMGQKMGVKITDEQLDQAIANIAKQNNMTMDQMRSRLAYDGLNYSTYRNQIRKEMIISEVRNNEVRRRITVLPQEVDALAKQIGTQNDASTELNLRHILIALPENPTSEQVNDAQRQAESIVEEARNGADFGKLAITYSADQQALKGGQMGWGRIQELPGIFAQALSTAKKGDIVGPIRSGVGFHILKVNDLRGQSQSISVTEVHARHILLKPSPIMNDQQARLKLEEIAADIKSGKTTFAAAAKEYSQDPGSANQGGDLGWATPDIFDPAFRDALTKLHKGQISAPVHSSFGWHLIELLDTRKVDKTDAAQKDRAYRMLMNRKFSEEAATWMQEQRASAYVKILSN.

A signal peptide spans 1–20; that stretch reads MKNWKTLLLGIAMIANTSFA. PpiC domains lie at 171-272 and 282-382; these read STEL…KVND and VTEV…ELLD.

It localises to the periplasm. The enzyme catalyses [protein]-peptidylproline (omega=180) = [protein]-peptidylproline (omega=0). Chaperone involved in the correct folding and assembly of outer membrane proteins. Recognizes specific patterns of aromatic residues and the orientation of their side chains, which are found more frequently in integral outer membrane proteins. May act in both early periplasmic and late outer membrane-associated steps of protein maturation. The chain is Chaperone SurA from Salmonella choleraesuis (strain SC-B67).